The primary structure comprises 145 residues: Protein SprT-like (145 aa).

A SprT-like domain is found at 5–140 (DYVREVSLAD…ACGRCHGRLI (136 aa)). His-64 lines the Zn(2+) pocket. Residue Glu-65 is part of the active site. His-68 serves as a coordination point for Zn(2+).

This sequence belongs to the SprT family. Requires Zn(2+) as cofactor.

The protein resides in the cytoplasm. This chain is Protein SprT-like, found in Streptococcus equi subsp. equi (strain 4047).